A 217-amino-acid chain; its full sequence is Large ribosomal subunit protein uL3 (217 aa).

Belongs to the universal ribosomal protein uL3 family. As to quaternary structure, part of the 50S ribosomal subunit. Forms a cluster with proteins L14 and L19.

One of the primary rRNA binding proteins, it binds directly near the 3'-end of the 23S rRNA, where it nucleates assembly of the 50S subunit. The protein is Large ribosomal subunit protein uL3 of Mycobacterium bovis (strain ATCC BAA-935 / AF2122/97).